A 291-amino-acid chain; its full sequence is Small ribosomal subunit protein uS2 (291 aa).

Residues Ser256–Trp291 form a disordered region.

Belongs to the universal ribosomal protein uS2 family. As to quaternary structure, component of the small ribosomal subunit. Mature ribosomes consist of a small (40S) and a large (60S) subunit. The 40S subunit contains about 33 different proteins and 1 molecule of RNA (18S). The 60S subunit contains about 49 different proteins and 3 molecules of RNA (25S, 5.8S and 5S). Interacts with RPS21.

The protein resides in the cytoplasm. Required for the assembly and/or stability of the 40S ribosomal subunit. Required for the processing of the 20S rRNA-precursor to mature 18S rRNA in a late step of the maturation of 40S ribosomal subunits. This chain is Small ribosomal subunit protein uS2, found in Coccidioides immitis (strain RS) (Valley fever fungus).